We begin with the raw amino-acid sequence, 1062 residues long: NACHT, LRR and PYD domains-containing protein 2 (1062 aa).

The Pyrin domain maps to 1–94 (MVSSAQMGFN…SERAKDEVRE (94 aa)). In terms of domain architecture, NACHT spans 207–526 (YTVVLYGPAG…LEKEEEEDRD (320 aa)). Residue 213–220 (GPAGLGKT) coordinates ATP. Ser671 is modified (phosphoserine). 8 LRR repeats span residues 812 to 832 (SLTCVNLSDNELLDEGAKLLY), 841 to 861 (FLQRLSLENCHLTEANCKDLA), 869 to 889 (ELTHLCLAKNPIGNTGVKFLC), 898 to 918 (KLQTLVLWNCDITSDGCCDLT), 926 to 946 (SLLCLDLGLNHIGVKGMKFLC), 955 to 976 (NLRCLWLWGCSIPPFSCEDLCS), 983 to 1003 (SLVTLDLGQNPLGSSGVKMLF), and 1010 to 1033 (SGTLRTLRLKIDDFNDELNKLLEE).

The protein belongs to the NLRP family. In terms of assembly, interacts with CHUK. Interacts with IKBKB. Interacts with IKBKG. Interacts with MEFV. Interacts with PYCARD. Interacts (via pyrin domain) with PYDC2. Interacts with CARD8. Expressed at high levels in lung, placenta and thymus and at lower levels in ovary, intestine and brain. Highly abundant in oocytes and early embryos, however poorly expressed in somatic tissues such as brain, kidney, liver and spinal cord.

It localises to the cytoplasm. In terms of biological role, suppresses TNF- and CD40-induced NFKB1 activity at the level of the IKK complex, by inhibiting NFKBIA degradation induced by TNF. When associated with PYCARD, activates CASP1, leading to the secretion of mature pro-inflammatory cytokine IL1B. May be a component of the inflammasome, a protein complex which also includes PYCARD, CARD8 and CASP1 and whose function would be the activation of pro-inflammatory caspases. The polypeptide is NACHT, LRR and PYD domains-containing protein 2 (NLRP2) (Homo sapiens (Human)).